We begin with the raw amino-acid sequence, 193 residues long: Major structural subunit of bundle-forming pilus (193 aa).

Residues 1–13 (MVSKIMNKKYEKG) constitute a propeptide, leader sequence. Residue leucine 14 is modified to N-methylleucine. The chain crosses the membrane as a helical span at residues 14–35 (LSLIESAMVLALAATVTAGVMF). A disulfide bridge links cysteine 129 with cysteine 179.

This sequence belongs to the N-Me-Phe pilin family. As to quaternary structure, 10 to 100 laterally aligned filaments or bundle-forming pili coalesce into rope-like bundles. These form linkages between the bacteria within the enteropathogenic E.coli (EPEC) microcolonies that are attached to epithelial cells.

It localises to the fimbrium. It is found in the membrane. In terms of biological role, major component of type IV bundle-forming pili (BFP) that plays a role in adherence to host cells and virulence. The polypeptide is Major structural subunit of bundle-forming pilus (bfpA) (Escherichia coli O127:H6 (strain E2348/69 / EPEC)).